The chain runs to 170 residues: Arginine repressor (170 aa).

This sequence belongs to the ArgR family.

The protein localises to the cytoplasm. The protein operates within amino-acid biosynthesis; L-arginine biosynthesis [regulation]. Its function is as follows. Regulates arginine biosynthesis genes. This Bifidobacterium longum (strain NCC 2705) protein is Arginine repressor.